The sequence spans 300 residues: Porphobilinogen deaminase (300 aa).

An S-(dipyrrolylmethanemethyl)cysteine modification is found at C241.

This sequence belongs to the HMBS family. Monomer. Dipyrromethane serves as cofactor.

The enzyme catalyses 4 porphobilinogen + H2O = hydroxymethylbilane + 4 NH4(+). It functions in the pathway porphyrin-containing compound metabolism; protoporphyrin-IX biosynthesis; coproporphyrinogen-III from 5-aminolevulinate: step 2/4. Functionally, tetrapolymerization of the monopyrrole PBG into the hydroxymethylbilane pre-uroporphyrinogen in several discrete steps. This chain is Porphobilinogen deaminase, found in Sorangium cellulosum (strain So ce56) (Polyangium cellulosum (strain So ce56)).